Consider the following 514-residue polypeptide: Developmental and secondary metabolism regulator veA (514 aa).

The Velvet domain maps to 26–218 (NRHLWYQLTV…ADQGCHVRIR (193 aa)). The short motif at 40 to 45 (ERARAC) is the Nuclear localization signal element. The disordered stretch occupies residues 219–463 (RDVRMRKRDA…PIGSKRKHDQ (245 aa)). A compositionally biased stretch (basic and acidic residues) spans 228 to 243 (AKSNNGRDRREDDMAR). Residues 256-267 (SAAARARSMSNS) show a composition bias toward low complexity. Residues 386–396 (SYPSTPVSSHP) show a composition bias toward polar residues. A PEST region spans residues 411–448 (KSPSNSVSPSNSSLKITDLLVQPLPSSEPKLEVGSAPC). Residues 412–423 (SPSNSVSPSNSS) are compositionally biased toward low complexity.

Belongs to the velvet family. VeA subfamily. Component of the heterotrimeric velvet complex composed of laeA, veA and velB; VeA acting as a bridging protein between laeA and velB.

It is found in the nucleus. Its subcellular location is the cytoplasm. Functionally, component of the velvet transcription factor complex that controls sexual/asexual developmental ratio in response to light, promoting sexual development in the darkness while stimulating asexual sporulation under illumination. The velvet complex hat acts as a global regulator for secondary metabolite gene expression. Controls the expression of the cephalosporin C gene cluster. Regulates hyphal fragmentation. In Hapsidospora chrysogenum (strain ATCC 11550 / CBS 779.69 / DSM 880 / IAM 14645 / JCM 23072 / IMI 49137) (Acremonium chrysogenum), this protein is Developmental and secondary metabolism regulator veA.